A 504-amino-acid chain; its full sequence is Arabinose import ATP-binding protein AraG (504 aa).

ABC transporter domains are found at residues 8-243 (LSFR…MVGR) and 256-499 (YGEE…MPKV). 40 to 47 (GENGAGKS) contributes to the ATP binding site.

It belongs to the ABC transporter superfamily. Arabinose importer (TC 3.A.1.2.2) family. As to quaternary structure, the complex is composed of two ATP-binding proteins (AraG), two transmembrane proteins (AraH) and a solute-binding protein (AraF).

The protein resides in the cell inner membrane. The catalysed reaction is L-arabinose(out) + ATP + H2O = L-arabinose(in) + ADP + phosphate + H(+). Functionally, part of the ABC transporter complex AraFGH involved in arabinose import. Responsible for energy coupling to the transport system. The protein is Arabinose import ATP-binding protein AraG of Escherichia coli (strain UTI89 / UPEC).